The sequence spans 321 residues: MVMGVSLSPALGRWFRHAIPFAILTLLLLYISIWFFYEWPFPLPAQRTQQSGLRGLKLPSPSPVLGSLLSFPAGVQSCNPERPLPSQTGPAARPLVVPEKEELPCLGPHGALGRMVSPFLACMSPEGDVALSQYLAGWRELLRFLTPLGTVFAFATSEAFNKVTDLEARVHGPNASHYTSLMTMITWERGAGLLQRPGTEPGHSAGSSGSRTLLLLHRALRWSQLCLHRVATGTLGGPDAGTQCGEAYSTALAPHHPWLIRQAARLAILALPSRGRLLQLACPGTGEADARVALARAAGVLEDVYNRTQGLLAGHGLLQLA.

The protein belongs to the GLTP family.

In Mus musculus (Mouse), this protein is Glycolipid transfer protein domain-containing protein 2 (Gltpd2).